Here is a 302-residue protein sequence, read N- to C-terminus: Putative S-adenosyl-L-methionine-dependent methyltransferase MAB_4586c (302 aa).

S-adenosyl-L-methionine contacts are provided by residues Asp-122 and 151 to 152 (DL).

The protein belongs to the UPF0677 family.

Functionally, exhibits S-adenosyl-L-methionine-dependent methyltransferase activity. In Mycobacteroides abscessus (strain ATCC 19977 / DSM 44196 / CCUG 20993 / CIP 104536 / JCM 13569 / NCTC 13031 / TMC 1543 / L948) (Mycobacterium abscessus), this protein is Putative S-adenosyl-L-methionine-dependent methyltransferase MAB_4586c.